The primary structure comprises 374 residues: 4-hydroxy-3-methylbut-2-en-1-yl diphosphate synthase (flavodoxin) (374 aa).

4 residues coordinate [4Fe-4S] cluster: Cys-270, Cys-273, Cys-305, and Glu-312.

The protein belongs to the IspG family. The cofactor is [4Fe-4S] cluster.

It carries out the reaction (2E)-4-hydroxy-3-methylbut-2-enyl diphosphate + oxidized [flavodoxin] + H2O + 2 H(+) = 2-C-methyl-D-erythritol 2,4-cyclic diphosphate + reduced [flavodoxin]. The protein operates within isoprenoid biosynthesis; isopentenyl diphosphate biosynthesis via DXP pathway; isopentenyl diphosphate from 1-deoxy-D-xylulose 5-phosphate: step 5/6. Its function is as follows. Converts 2C-methyl-D-erythritol 2,4-cyclodiphosphate (ME-2,4cPP) into 1-hydroxy-2-methyl-2-(E)-butenyl 4-diphosphate. The chain is 4-hydroxy-3-methylbut-2-en-1-yl diphosphate synthase (flavodoxin) from Cellvibrio japonicus (strain Ueda107) (Pseudomonas fluorescens subsp. cellulosa).